The primary structure comprises 157 residues: Small ribosomal subunit protein uS7 (157 aa).

Belongs to the universal ribosomal protein uS7 family. Part of the 30S ribosomal subunit. Contacts proteins S9 and S11.

Its function is as follows. One of the primary rRNA binding proteins, it binds directly to 16S rRNA where it nucleates assembly of the head domain of the 30S subunit. Is located at the subunit interface close to the decoding center, probably blocks exit of the E-site tRNA. The protein is Small ribosomal subunit protein uS7 of Chlamydia trachomatis serovar A (strain ATCC VR-571B / DSM 19440 / HAR-13).